A 97-amino-acid chain; its full sequence is Putative membrane protein insertion efficiency factor (97 aa).

The disordered stretch occupies residues Val-77–Pro-97. Low complexity predominate over residues Ser-85–Pro-97.

The protein belongs to the UPF0161 family.

It is found in the cell inner membrane. Could be involved in insertion of integral membrane proteins into the membrane. In Xanthomonas euvesicatoria pv. vesicatoria (strain 85-10) (Xanthomonas campestris pv. vesicatoria), this protein is Putative membrane protein insertion efficiency factor.